We begin with the raw amino-acid sequence, 687 residues long: Fork-head transcriptional regulator 2 (687 aa).

The disordered stretch occupies residues 1-23 (MSAQFITPKKRPHSPLDSNELLP). Residues 82 to 146 (VSIGRNIELS…NGARIDGQKV (65 aa)) form the FHA domain. Over residues 226 to 241 (SPSSISANSLQSNLDQ) the composition is skewed to polar residues. A disordered region spans residues 226–246 (SPSSISANSLQSNLDQDLSKE). The fork-head DNA-binding region spans 252–350 (KPPYSYATMI…SDGTISKTRR (99 aa)). Disordered stretches follow at residues 385–449 (AASI…RYTP), 472–569 (QLGR…IGLN), and 584–687 (PERG…MIDS). Positions 389–410 (PQQQKQQQQQQKRPPQQQNSQP) are enriched in low complexity. Residues 411–442 (HLSQPHYTIPSNPMQTNSMGYIPQSNIYNMSN) show a composition bias toward polar residues. Positions 472–490 (QLGRPQGQLGQPMMQPQQQ) are enriched in low complexity. Residues 491-540 (SYTSSNIKTEPSSPKRNPSISNNTPKMAKGTVSTESHSRSTSYTTTQLHE) show a composition bias toward polar residues. Composition is skewed to low complexity over residues 542 to 563 (SNFN…TTTN) and 589 to 624 (KGNP…PNTN). Residues 625 to 659 (QSSPAFWNFVQFSTPNGQSPVRKSSEEVGNNSPTL) are compositionally biased toward polar residues. The Nuclear localization signal motif lies at 663–670 (IKREREND).

It localises to the nucleus. Functionally, transcription factor required for the morphogenesis of true hyphal as well as yeast cells. Contributes to virulence. This Candida albicans (strain SC5314 / ATCC MYA-2876) (Yeast) protein is Fork-head transcriptional regulator 2 (FKH2).